Here is a 101-residue protein sequence, read N- to C-terminus: Small ribosomal subunit protein uS14 (101 aa).

This sequence belongs to the universal ribosomal protein uS14 family. As to quaternary structure, part of the 30S ribosomal subunit. Contacts proteins S3 and S10.

Functionally, binds 16S rRNA, required for the assembly of 30S particles and may also be responsible for determining the conformation of the 16S rRNA at the A site. This is Small ribosomal subunit protein uS14 from Synechococcus sp. (strain JA-3-3Ab) (Cyanobacteria bacterium Yellowstone A-Prime).